We begin with the raw amino-acid sequence, 304 residues long: Mitochondrial RNA-splicing protein MRS4 (304 aa).

Solcar repeat units follow at residues 21–108, 118–200, and 207–300; these read APLH…CKAR, HQPM…ASKF, and YNPL…AKHF. 6 helical membrane-spanning segments follow: residues 23 to 41, 83 to 102, 120 to 139, 175 to 194, 209 to 228, and 275 to 288; these read LHSQ…HSLM, GVQS…FGTY, PMKT…ALMN, SYPT…FMIY, PLIH…ALTT, and GLKP…PATA.

It belongs to the mitochondrial carrier (TC 2.A.29) family.

The protein localises to the mitochondrion inner membrane. Functionally, MRS4 suppresses a mitochondrial splice defect in the first intron of the COB gene. It may act as a carrier, exerting its suppressor activity via modulation of solute concentrations in the mitochondrion (possibly of cations). Not essential. In Saccharomyces cerevisiae (strain ATCC 204508 / S288c) (Baker's yeast), this protein is Mitochondrial RNA-splicing protein MRS4 (MRS4).